A 145-amino-acid polypeptide reads, in one-letter code: Large ribosomal subunit protein uL15 (145 aa).

A disordered region spans residues 1–52 (MKLNTIAPAEGSKKDRRRVGRGIGSGFGKTAGRGHKGQHARSGGYHKVGFEG). Residues 21-31 (RGIGSGFGKTA) are compositionally biased toward gly residues.

Belongs to the universal ribosomal protein uL15 family. Part of the 50S ribosomal subunit.

Functionally, binds to the 23S rRNA. The protein is Large ribosomal subunit protein uL15 of Acidithiobacillus ferrooxidans (strain ATCC 53993 / BNL-5-31) (Leptospirillum ferrooxidans (ATCC 53993)).